The primary structure comprises 279 residues: MWRMRVVHSTGYVYESPATASFNEARLTPRSNTRQTVILNRVETIPATRSYRYIDYWGTVVTAFDLRAPHTELTVTSSSVVETESLEPSVSRITWTELQSMAVIDRFDEVLQPTAYTPVNTRVAAVGKRIAKNHEPRKAVVAAARWARSKLDYIPGTTGVHSSGLDALHQCRGVCQDFAHLTLIVLRSMGIPGRYVSGYLHPKRDAVVGKTVEGRSHAWIQAWTGGWWNYDPTNDVEITEQYISVGVGRDYTDVAPLKGIYSGRGATDLDVVVEITRLA.

The protein to M.tuberculosis Rv2569c.

This is an uncharacterized protein from Mycobacterium leprae (strain TN).